Reading from the N-terminus, the 515-residue chain is MNDQVIIFDTTLRDGEQALAASLTVKEKLQIAYALERLGVDVIEAGFPISSPGDFESVQTIAKHIKDSRICALSRAVAKDIDAAAEALKVADQFRIHTFISTSTVHVQDKLRRSYDDVVEMAVKAVKHARNYTDDVEFSCEDAGRTPIDNLCRMVEAAINAGAKTINIPDTVGYTVPNEFGGIIKTLFDRVPNIDQAIISVHCHDDLGMSVANSIAAVQAGARQIEGTINGIGERAGNCSLEEIAMIIKTRQELLGVHTGLDHKEIHRTSKLVSQLCHMPIQDNKAIVGANAFSHSSGIHQDGMLKNKNTYEIMTPESIGLKNKALNLTSRSGRAAVKSHMDAMGYKDNEYNLDSLYEDFLKLADRKGQVFDYDLEALMHFANLRDEDDFYKLNYLSVQSGSVMSTTSIKLQCGDEEKCEAAVGNGPVDALYQCIYRLTGYEIALDKFDLTAKGEGEDGLGQADIIANYKGRKYHGTGVSTDIVEASGQALLHVINSIQRADTIAEMKQQKFATV.

The 263-residue stretch at 5–267 folds into the Pyruvate carboxyltransferase domain; it reads VIIFDTTLRD…HTGLDHKEIH (263 aa). Positions 14, 202, 204, and 238 each coordinate Mn(2+). A regulatory domain region spans residues 392 to 515; sequence KLNYLSVQSG…EMKQQKFATV (124 aa).

It belongs to the alpha-IPM synthase/homocitrate synthase family. LeuA type 1 subfamily. As to quaternary structure, homodimer. Mn(2+) is required as a cofactor.

It is found in the cytoplasm. The enzyme catalyses 3-methyl-2-oxobutanoate + acetyl-CoA + H2O = (2S)-2-isopropylmalate + CoA + H(+). It functions in the pathway amino-acid biosynthesis; L-leucine biosynthesis; L-leucine from 3-methyl-2-oxobutanoate: step 1/4. Catalyzes the condensation of the acetyl group of acetyl-CoA with 3-methyl-2-oxobutanoate (2-ketoisovalerate) to form 3-carboxy-3-hydroxy-4-methylpentanoate (2-isopropylmalate). The polypeptide is 2-isopropylmalate synthase (Vibrio atlanticus (strain LGP32) (Vibrio splendidus (strain Mel32))).